We begin with the raw amino-acid sequence, 368 residues long: Ribulose bisphosphate carboxylase-like protein 1 (368 aa).

Belongs to the RuBisCO large chain family. Type IV subfamily.

Its function is as follows. Unknown. Probably does not have RuBisCO activity. This chain is Ribulose bisphosphate carboxylase-like protein 1 (rlp1), found in Rhodopseudomonas palustris (strain ATCC BAA-98 / CGA009).